Reading from the N-terminus, the 92-residue chain is Acylphosphatase (92 aa).

Residues Cys-5 and Cys-49 are joined by a disulfide bond. Positions Cys-5 to Arg-92 constitute an Acylphosphatase-like domain. Residues Arg-20 and Asn-38 contribute to the active site.

The protein belongs to the acylphosphatase family.

The enzyme catalyses an acyl phosphate + H2O = a carboxylate + phosphate + H(+). The sequence is that of Acylphosphatase from Shigella boydii serotype 4 (strain Sb227).